Consider the following 79-residue polypeptide: MARAVVHVMLRAEILDPQGQAIAGALGRLGHTGISDVRQGKRFELEIDDTVDDSELAMIAESLLANTVIEDWTITRESQ.

Belongs to the PurS family. As to quaternary structure, homodimer. Part of the FGAM synthase complex composed of 1 PurL, 1 PurQ and 2 PurS subunits.

It is found in the cytoplasm. It carries out the reaction N(2)-formyl-N(1)-(5-phospho-beta-D-ribosyl)glycinamide + L-glutamine + ATP + H2O = 2-formamido-N(1)-(5-O-phospho-beta-D-ribosyl)acetamidine + L-glutamate + ADP + phosphate + H(+). The protein operates within purine metabolism; IMP biosynthesis via de novo pathway; 5-amino-1-(5-phospho-D-ribosyl)imidazole from N(2)-formyl-N(1)-(5-phospho-D-ribosyl)glycinamide: step 1/2. Its function is as follows. Part of the phosphoribosylformylglycinamidine synthase complex involved in the purines biosynthetic pathway. Catalyzes the ATP-dependent conversion of formylglycinamide ribonucleotide (FGAR) and glutamine to yield formylglycinamidine ribonucleotide (FGAM) and glutamate. The FGAM synthase complex is composed of three subunits. PurQ produces an ammonia molecule by converting glutamine to glutamate. PurL transfers the ammonia molecule to FGAR to form FGAM in an ATP-dependent manner. PurS interacts with PurQ and PurL and is thought to assist in the transfer of the ammonia molecule from PurQ to PurL. This chain is Phosphoribosylformylglycinamidine synthase subunit PurS, found in Mycobacterium leprae (strain TN).